The chain runs to 317 residues: uncharacterized protein (317 aa).

7 helical membrane passes run 24–44 (ISII…TGIM), 63–83 (LSIS…SILA), 136–156 (LGVA…ISED), 187–207 (LIPI…IGFF), 229–249 (ILAL…GGFL), 252–272 (GILS…LTFS), and 295–315 (IVMV…AGLL).

To M.jannaschii MJ0880, MJ1556 and MJ1589.

The protein resides in the cell membrane. This is an uncharacterized protein from Methanocaldococcus jannaschii (strain ATCC 43067 / DSM 2661 / JAL-1 / JCM 10045 / NBRC 100440) (Methanococcus jannaschii).